A 313-amino-acid chain; its full sequence is Glucan 1,3-beta-glucosidase (313 aa).

The signal sequence occupies residues 1–23 (MRFSTTLATAATALFFTASQVSA). Glutamate 124 (proton donor) is an active-site residue. Asparagine 202 carries N-linked (GlcNAc...) asparagine glycosylation. The active-site Nucleophile is the glutamate 233. Residue asparagine 284 is glycosylated (N-linked (GlcNAc...) asparagine).

Belongs to the glycosyl hydrolase 17 family.

It localises to the secreted. The protein resides in the cell wall. It carries out the reaction Successive hydrolysis of beta-D-glucose units from the non-reducing ends of (1-&gt;3)-beta-D-glucans, releasing alpha-glucose.. In terms of biological role, glucanases possibly play a role in cell expansion during growth, in cell-cell fusion during mating, and in spore release during sporulation. This enzyme may be involved in beta-glucan degradation and also function biosynthetically as a transglycosylase. The protein is Glucan 1,3-beta-glucosidase (BGL2) of Saccharomyces cerevisiae (strain ATCC 204508 / S288c) (Baker's yeast).